The sequence spans 487 residues: 4-alpha-glucanotransferase (487 aa).

This sequence belongs to the disproportionating enzyme family.

Its subcellular location is the cytoplasm. It catalyses the reaction Transfers a segment of a (1-&gt;4)-alpha-D-glucan to a new position in an acceptor, which may be glucose or a (1-&gt;4)-alpha-D-glucan.. Functionally, catalyzes a disproportionation reaction in which single or multiple glucose units from oligosaccharides are transferred to the 4-hydroxyl group of acceptor sugars. Glucose, maltose and maltotriose can act as acceptor, whereas of the three only maltotriose can act as donor. This chain is 4-alpha-glucanotransferase (malQ), found in Clostridium butyricum.